A 154-amino-acid polypeptide reads, in one-letter code: Troponin C, isoform 1 (154 aa).

4 consecutive EF-hand domains span residues 8–43, 44–79, 84–119, and 120–154; these read EQTA…LGHQ, LDDA…FLVE, AMMA…LDDK, and LTND…GGDD. Residues Asp57, Asp59, Ser61, Gln63, and Glu68 each contribute to the Ca(2+) site. The Ca(2+) site is built by Asp133, Asp135, Ser137, Thr139, and Glu144.

The protein belongs to the troponin C family. As to expression, present only in adult muscles.

The chain is Troponin C, isoform 1 (TpnC41C) from Drosophila melanogaster (Fruit fly).